The chain runs to 289 residues: Mitochondrial fission regulator 1-like (289 aa).

T27 is subject to Phosphothreonine. 8 positions are modified to phosphoserine: S38, S100, S107, S221, S222, S235, S258, and S270.

It belongs to the MTFR1 family. In terms of processing, phosphorylated by AMPK. Upon stress, phosphorylation by AMPK is sufficient to induce mitochondrial fragmentation.

It localises to the mitochondrion outer membrane. In terms of biological role, mitochondrial protein required for adaptation of miochondrial dynamics to metabolic changes. Regulates mitochondrial morphology at steady state and mediates AMPK-dependent stress-induced mitochondrial fragmentation via the control of OPA1 levels. This is Mitochondrial fission regulator 1-like (Mtfr1l) from Rattus norvegicus (Rat).